Reading from the N-terminus, the 629-residue chain is Phosphoglucomutase, chloroplastic (629 aa).

Residues 1-69 (MSSTYARFDT…SSSSGPIIAG (69 aa)) constitute a chloroplast transit peptide. Residues Arg-94 and Ser-187 each coordinate alpha-D-glucose 1,6-bisphosphate. The active-site Phosphoserine intermediate is Ser-187. 4 residues coordinate Mg(2+): Ser-187, Asp-352, Asp-354, and Asp-356. A Phosphoserine modification is found at Ser-187. Positions 356, 357, 420, 439, 441, and 452 each coordinate alpha-D-glucose 1,6-bisphosphate.

This sequence belongs to the phosphohexose mutase family. In terms of assembly, monomer. Mg(2+) serves as cofactor.

It localises to the plastid. It is found in the chloroplast. The catalysed reaction is alpha-D-glucose 1-phosphate = alpha-D-glucose 6-phosphate. The enzyme catalyses O-phospho-L-seryl-[protein] + alpha-D-glucose 1-phosphate = alpha-D-glucose 1,6-bisphosphate + L-seryl-[protein]. It carries out the reaction alpha-D-glucose 1,6-bisphosphate + L-seryl-[protein] = O-phospho-L-seryl-[protein] + alpha-D-glucose 6-phosphate. Its activity is regulated as follows. Inhibited by the Calvin cycle intermediates fructose-1,6-bisphosphate and ribulose-1,5-bisphosphate. Its function is as follows. Catalyzes the reversible isomerization of alpha-D-glucose 1-phosphate to alpha-D-glucose 6-phosphate. The mechanism proceeds via the intermediate compound alpha-D-glucose 1,6-bisphosphate. This enzyme participates in both the breakdown and synthesis of glucose. The protein is Phosphoglucomutase, chloroplastic (PGMP) of Brassica napus (Rape).